The sequence spans 361 residues: Nicotinate-nucleotide--dimethylbenzimidazole phosphoribosyltransferase (361 aa).

The active-site Proton acceptor is glutamate 315.

The protein belongs to the CobT family.

It catalyses the reaction 5,6-dimethylbenzimidazole + nicotinate beta-D-ribonucleotide = alpha-ribazole 5'-phosphate + nicotinate + H(+). Its pathway is nucleoside biosynthesis; alpha-ribazole biosynthesis; alpha-ribazole from 5,6-dimethylbenzimidazole: step 1/2. In terms of biological role, catalyzes the synthesis of alpha-ribazole-5'-phosphate from nicotinate mononucleotide (NAMN) and 5,6-dimethylbenzimidazole (DMB). The polypeptide is Nicotinate-nucleotide--dimethylbenzimidazole phosphoribosyltransferase (Clostridium perfringens (strain 13 / Type A)).